The primary structure comprises 236 residues: Large ribosomal subunit protein uL1 (236 aa).

Belongs to the universal ribosomal protein uL1 family. Part of the 50S ribosomal subunit.

Functionally, binds directly to 23S rRNA. The L1 stalk is quite mobile in the ribosome, and is involved in E site tRNA release. Protein L1 is also a translational repressor protein, it controls the translation of the L11 operon by binding to its mRNA. This is Large ribosomal subunit protein uL1 from Protochlamydia amoebophila (strain UWE25).